A 72-amino-acid chain; its full sequence is Small ribosomal subunit protein bS20 (72 aa).

This sequence belongs to the bacterial ribosomal protein bS20 family.

In terms of biological role, binds directly to 16S ribosomal RNA. In Aeromonas salmonicida, this protein is Small ribosomal subunit protein bS20 (rpsT).